The chain runs to 432 residues: Asparagine--tRNA ligase (432 aa).

The protein belongs to the class-II aminoacyl-tRNA synthetase family. In terms of assembly, homodimer.

The protein resides in the cytoplasm. It catalyses the reaction tRNA(Asn) + L-asparagine + ATP = L-asparaginyl-tRNA(Asn) + AMP + diphosphate + H(+). The chain is Asparagine--tRNA ligase from Lacticaseibacillus paracasei (strain ATCC 334 / BCRC 17002 / CCUG 31169 / CIP 107868 / KCTC 3260 / NRRL B-441) (Lactobacillus paracasei).